Consider the following 120-residue polypeptide: Large ribosomal subunit protein uL18 (120 aa).

The protein belongs to the universal ribosomal protein uL18 family. In terms of assembly, part of the 50S ribosomal subunit; part of the 5S rRNA/L5/L18/L25 subcomplex. Contacts the 5S and 23S rRNAs.

In terms of biological role, this is one of the proteins that bind and probably mediate the attachment of the 5S RNA into the large ribosomal subunit, where it forms part of the central protuberance. The sequence is that of Large ribosomal subunit protein uL18 from Staphylococcus saprophyticus subsp. saprophyticus (strain ATCC 15305 / DSM 20229 / NCIMB 8711 / NCTC 7292 / S-41).